The primary structure comprises 138 residues: Putative membrane protein insertion efficiency factor (138 aa).

The segment at 71–138 (YDPVPGTPEA…GTPSHTRGEN (68 aa)) is disordered. Over residues 81 to 113 (RQWRELHPETARSKNEPIHDLTDDNPRDHEPAL) the composition is skewed to basic and acidic residues. The span at 123–138 (PGSTHTGTPSHTRGEN) shows a compositional bias: polar residues.

The protein belongs to the UPF0161 family.

The protein localises to the cell membrane. Its function is as follows. Could be involved in insertion of integral membrane proteins into the membrane. The polypeptide is Putative membrane protein insertion efficiency factor (Cutibacterium acnes (strain DSM 16379 / KPA171202) (Propionibacterium acnes)).